Reading from the N-terminus, the 252-residue chain is Trans-aconitate 2-methyltransferase (252 aa).

It belongs to the methyltransferase superfamily. Tam family.

It localises to the cytoplasm. It carries out the reaction trans-aconitate + S-adenosyl-L-methionine = (E)-3-(methoxycarbonyl)pent-2-enedioate + S-adenosyl-L-homocysteine. Its function is as follows. Catalyzes the S-adenosylmethionine monomethyl esterification of trans-aconitate. The chain is Trans-aconitate 2-methyltransferase from Shigella dysenteriae serotype 1 (strain Sd197).